A 20-amino-acid polypeptide reads, in one-letter code: Endo-1,6-beta-glucanase (20 aa).

This sequence belongs to the glycosyl hydrolase 5 (cellulase A) family.

The protein localises to the secreted. It is found in the extracellular space. It carries out the reaction Random hydrolysis of (1-&gt;6)-linkages in (1-&gt;6)-beta-D-glucans.. Functionally, endo-1,6-beta-glucanase that has highest activity against the beta-1,6-glucan pustulan. Also active against the beta-1,6-glucan lutean. Lower activity against laminarin (beta-1,3-glucan with beta-1,6-branches). Little or no activity against gentiobiose, yeast glucan, lichenin, scleroglucan, curdlan, barley glucan, CM cellulose, HE cellulose, pachyman and pullulan. This chain is Endo-1,6-beta-glucanase, found in Acremonium sp.